The following is a 416-amino-acid chain: Calreticulin (416 aa).

Residues 1 to 17 (MLLSVPLLLGLLGLAAA) form the signal peptide. Positions 18 to 197 (DPAIYFKEQF…NSQVESGSLE (180 aa)) are N-domain. Glutamine 26 is a binding site for Ca(2+). Residue lysine 48 is modified to N6-acetyllysine. Positions 62 and 64 each coordinate Ca(2+). An N6-(2-hydroxyisobutyryl)lysine modification is found at lysine 64. A disulfide bridge connects residues cysteine 105 and cysteine 137. An alpha-D-glucoside contacts are provided by tyrosine 109, lysine 111, tyrosine 128, and aspartate 135. Residue lysine 159 is modified to N6-acetyllysine. Residues 191–202 (VESGSLEDDWDF) form a 1-1 repeat. A 4 X approximate repeats region spans residues 191-255 (VESGSLEDDW…DAKKPEDWDE (65 aa)). The tract at residues 193 to 277 (SGSLEDDWDF…NPEYKGEWKP (85 aa)) is disordered. The segment at 198–308 (DDWDFLPPKK…YSPDANIYAY (111 aa)) is P-domain. Positions 207–251 (KIKDPDAAKPEDWDERAKIDDPTDSKPEDWDKPEHIPDPDAKKPE) are enriched in basic and acidic residues. Lysine 209 bears the N6-acetyllysine mark. 6 repeat units span residues 210–221 (DPDAAKPEDWDE), 227–238 (DPTDSKPEDWDK), 244–255 (DPDAKKPEDWDE), 259–269 (GEWEPPVIQNP), 273–283 (GEWKPRQIDNP), and 287–297 (GTWIHPEIDNP). The segment at 237–270 (DKPEHIPDPDAKKPEDWDEEMDGEWEPPVIQNPE) is interaction with PPIB. A compositionally biased stretch (acidic residues) spans 252 to 261 (DWDEEMDGEW). Positions 259–297 (GEWEPPVIQNPEYKGEWKPRQIDNPDYKGTWIHPEIDNP) are 3 X approximate repeats. Residues 309–416 (DSFAVLGLDL…DATGQAKDEL (108 aa)) are C-domain. Aspartate 317 contacts an alpha-D-glucoside. Aspartate 328 is a Ca(2+) binding site. Residues 350–416 (TKAAEKQMKD…DATGQAKDEL (67 aa)) form a disordered region. Residues 352–379 (AAEKQMKDKQDEEQRLKEEEEDKKRKEE) show a composition bias toward basic and acidic residues. Acidic residues predominate over residues 380-408 (EEAEDKEDEDDRDEDEDEEDEKEEDEEDA). Residues 413–416 (KDEL) carry the Prevents secretion from ER motif.

The protein belongs to the calreticulin family. In terms of assembly, monomer. Component of an EIF2 complex at least composed of CELF1/CUGBP1, CALR, CALR3, EIF2S1, EIF2S2, HSP90B1 and HSPA5. Interacts with GABARAP, NR3C1 and TRIM21. Interacts with PPIB and SPACA9. Interacts (via P-domain) with PDIA5. Interacts with PDIA3/ERp57. Interacts with CLCC1. Predentin and odontoblast.

It is found in the endoplasmic reticulum lumen. It localises to the cytoplasm. Its subcellular location is the cytosol. The protein localises to the secreted. The protein resides in the extracellular space. It is found in the extracellular matrix. It localises to the cell surface. Its subcellular location is the sarcoplasmic reticulum lumen. The protein localises to the cytoplasmic vesicle. The protein resides in the secretory vesicle. It is found in the cortical granule. It localises to the cytolytic granule. Its function is as follows. Calcium-binding chaperone that promotes folding, oligomeric assembly and quality control in the endoplasmic reticulum (ER) via the calreticulin/calnexin cycle. This lectin interacts transiently with almost all of the monoglucosylated glycoproteins that are synthesized in the ER. Interacts with the DNA-binding domain of NR3C1 and mediates its nuclear export. Involved in maternal gene expression regulation. May participate in oocyte maturation via the regulation of calcium homeostasis. Present in the cortical granules of non-activated oocytes, is exocytosed during the cortical reaction in response to oocyte activation and might participate in the block to polyspermy. The protein is Calreticulin (Calr) of Rattus norvegicus (Rat).